Here is a 176-residue protein sequence, read N- to C-terminus: Large ribosomal subunit protein uL6 (176 aa).

Residues 151–170 (RPPEPYKGKGVRYADEQVRR) show a composition bias toward basic and acidic residues. The disordered stretch occupies residues 151 to 176 (RPPEPYKGKGVRYADEQVRRKEAKKK).

The protein belongs to the universal ribosomal protein uL6 family. In terms of assembly, part of the 50S ribosomal subunit.

This protein binds to the 23S rRNA, and is important in its secondary structure. It is located near the subunit interface in the base of the L7/L12 stalk, and near the tRNA binding site of the peptidyltransferase center. This chain is Large ribosomal subunit protein uL6, found in Shewanella piezotolerans (strain WP3 / JCM 13877).